The chain runs to 353 residues: Phenol hydroxylase P5 protein (353 aa).

The 2Fe-2S ferredoxin-type domain maps to 3 to 93 (YQVTIEPIGT…DMVIEADVDE (91 aa)). 4 residues coordinate [2Fe-2S] cluster: cysteine 37, cysteine 42, cysteine 45, and cysteine 77. An FAD-binding FR-type domain is found at 102 to 201 (VQDYQATVIE…SGPYGQFFVR (100 aa)).

In terms of assembly, the multicomponent enzyme phenol hydroxylase is formed by P0, P1, P2, P3, P4 and P5 polypeptides. FAD is required as a cofactor. Requires [2Fe-2S] cluster as cofactor.

It catalyses the reaction phenol + NADPH + O2 + H(+) = catechol + NADP(+) + H2O. Its pathway is aromatic compound metabolism; phenol degradation. Functionally, catabolizes phenol, and some of its methylated derivatives. P5 is required for growth on phenol, and for in vitro phenol hydroxylase activity. Probable electron transfer from NADPH, via FAD and the 2Fe-2S center, to the oxygenase activity site of the enzyme. The polypeptide is Phenol hydroxylase P5 protein (mphP) (Acinetobacter pittii (strain PHEA-2)).